Reading from the N-terminus, the 105-residue chain is Insulin (105 aa).

Residues 1 to 24 (MALWTRLVPLLALLALWAPAPAHA) form the signal peptide. Disulfide bonds link Cys31-Cys91, Cys43-Cys104, and Cys90-Cys95. Positions 57–82 (EVEGPQVGALELAGGPGAGGLEGPPQ) are cleaved as a propeptide — c peptide.

It belongs to the insulin family. In terms of assembly, heterodimer of a B chain and an A chain linked by two disulfide bonds.

It localises to the secreted. Its function is as follows. Insulin decreases blood glucose concentration. It increases cell permeability to monosaccharides, amino acids and fatty acids. It accelerates glycolysis, the pentose phosphate cycle, and glycogen synthesis in liver. The chain is Insulin (INS) from Ovis aries (Sheep).